The following is a 182-amino-acid chain: UPF0397 protein BT9727_2423 (182 aa).

5 consecutive transmembrane segments (helical) span residues Val9–Ile29, Ala40–Ile60, Trp71–Ile91, Ile114–Val134, and Ile142–Leu162.

It belongs to the UPF0397 family.

It localises to the cell membrane. This chain is UPF0397 protein BT9727_2423, found in Bacillus thuringiensis subsp. konkukian (strain 97-27).